Consider the following 431-residue polypeptide: Serine hydroxymethyltransferase 2 (431 aa).

(6S)-5,6,7,8-tetrahydrofolate is bound by residues leucine 131 and 135–137 (GHL). Position 240 is an N6-(pyridoxal phosphate)lysine (lysine 240). Glutamate 256 lines the (6S)-5,6,7,8-tetrahydrofolate pocket.

The protein belongs to the SHMT family. In terms of assembly, homodimer. Pyridoxal 5'-phosphate serves as cofactor.

It is found in the cytoplasm. It carries out the reaction (6R)-5,10-methylene-5,6,7,8-tetrahydrofolate + glycine + H2O = (6S)-5,6,7,8-tetrahydrofolate + L-serine. The protein operates within one-carbon metabolism; tetrahydrofolate interconversion. It functions in the pathway amino-acid biosynthesis; glycine biosynthesis; glycine from L-serine: step 1/1. Catalyzes the reversible interconversion of serine and glycine with tetrahydrofolate (THF) serving as the one-carbon carrier. This reaction serves as the major source of one-carbon groups required for the biosynthesis of purines, thymidylate, methionine, and other important biomolecules. Also exhibits THF-independent aldolase activity toward beta-hydroxyamino acids, producing glycine and aldehydes, via a retro-aldol mechanism. This Vibrio vulnificus (strain CMCP6) protein is Serine hydroxymethyltransferase 2.